The following is a 210-amino-acid chain: FMN-dependent NADH:quinone oxidoreductase (210 aa).

FMN is bound by residues Ser-9 and 15–17 (SHS).

It belongs to the azoreductase type 1 family. In terms of assembly, homodimer. FMN serves as cofactor.

The enzyme catalyses 2 a quinone + NADH + H(+) = 2 a 1,4-benzosemiquinone + NAD(+). The catalysed reaction is N,N-dimethyl-1,4-phenylenediamine + anthranilate + 2 NAD(+) = 2-(4-dimethylaminophenyl)diazenylbenzoate + 2 NADH + 2 H(+). Functionally, quinone reductase that provides resistance to thiol-specific stress caused by electrophilic quinones. In terms of biological role, also exhibits azoreductase activity. Catalyzes the reductive cleavage of the azo bond in aromatic azo compounds to the corresponding amines. The polypeptide is FMN-dependent NADH:quinone oxidoreductase (Mesorhizobium japonicum (strain LMG 29417 / CECT 9101 / MAFF 303099) (Mesorhizobium loti (strain MAFF 303099))).